We begin with the raw amino-acid sequence, 93 residues long: Co-chaperonin GroES (93 aa).

The protein belongs to the GroES chaperonin family. As to quaternary structure, heptamer of 7 subunits arranged in a ring. Interacts with the chaperonin GroEL.

The protein localises to the cytoplasm. Functionally, together with the chaperonin GroEL, plays an essential role in assisting protein folding. The GroEL-GroES system forms a nano-cage that allows encapsulation of the non-native substrate proteins and provides a physical environment optimized to promote and accelerate protein folding. GroES binds to the apical surface of the GroEL ring, thereby capping the opening of the GroEL channel. In Streptococcus sanguinis, this protein is Co-chaperonin GroES.